Consider the following 467-residue polypeptide: Light-independent protochlorophyllide reductase subunit N (467 aa).

[4Fe-4S] cluster-binding residues include cysteine 23, cysteine 48, and cysteine 108.

The protein belongs to the BchN/ChlN family. Protochlorophyllide reductase is composed of three subunits; ChlL, ChlN and ChlB. Forms a heterotetramer of two ChlB and two ChlN subunits. [4Fe-4S] cluster is required as a cofactor.

It catalyses the reaction chlorophyllide a + oxidized 2[4Fe-4S]-[ferredoxin] + 2 ADP + 2 phosphate = protochlorophyllide a + reduced 2[4Fe-4S]-[ferredoxin] + 2 ATP + 2 H2O. It participates in porphyrin-containing compound metabolism; chlorophyll biosynthesis (light-independent). Functionally, component of the dark-operative protochlorophyllide reductase (DPOR) that uses Mg-ATP and reduced ferredoxin to reduce ring D of protochlorophyllide (Pchlide) to form chlorophyllide a (Chlide). This reaction is light-independent. The NB-protein (ChlN-ChlB) is the catalytic component of the complex. This chain is Light-independent protochlorophyllide reductase subunit N, found in Nostoc sp. (strain PCC 7120 / SAG 25.82 / UTEX 2576).